The following is a 93-amino-acid chain: Putative septation protein SpoVG (93 aa).

This sequence belongs to the SpoVG family.

Could be involved in septation. This chain is Putative septation protein SpoVG, found in Lachnoclostridium phytofermentans (strain ATCC 700394 / DSM 18823 / ISDg) (Clostridium phytofermentans).